Reading from the N-terminus, the 126-residue chain is Urease subunit beta (126 aa).

Belongs to the urease beta subunit family. Heterotrimer of UreA (gamma), UreB (beta) and UreC (alpha) subunits. Three heterotrimers associate to form the active enzyme.

Its subcellular location is the cytoplasm. The catalysed reaction is urea + 2 H2O + H(+) = hydrogencarbonate + 2 NH4(+). The protein operates within nitrogen metabolism; urea degradation; CO(2) and NH(3) from urea (urease route): step 1/1. This Frankia casuarinae (strain DSM 45818 / CECT 9043 / HFP020203 / CcI3) protein is Urease subunit beta.